The chain runs to 342 residues: Phospho-N-acetylmuramoyl-pentapeptide-transferase (342 aa).

Transmembrane regions (helical) follow at residues 8-28 (VAQPYFCSFLLSTILGFVIAP), 58-78 (GIPSMGGVIILLPCILSTAIF), 86-106 (IWVILTTMVAFAILGGVDDYL), 116-136 (ISLEAKLFAQLLIASAALIFL), 152-172 (GLIDLGWAYMPFAYIVVVGSS), 184-204 (LATLPIITSTAILGIIGHLSL), 213-233 (VVGANIPIFCSALVGSALSFL), 242-262 (VFMGDLGSLSLGASLGLMSVM), 267-287 (FIYAISGCIFVAEAISSMAQV), and 318-338 (IVTRAWVIAMVSFVVSLAAII).

This sequence belongs to the glycosyltransferase 4 family. MraY subfamily. Requires Mg(2+) as cofactor.

It localises to the cell inner membrane. The enzyme catalyses UDP-N-acetyl-alpha-D-muramoyl-L-alanyl-gamma-D-glutamyl-meso-2,6-diaminopimeloyl-D-alanyl-D-alanine + di-trans,octa-cis-undecaprenyl phosphate = di-trans,octa-cis-undecaprenyl diphospho-N-acetyl-alpha-D-muramoyl-L-alanyl-D-glutamyl-meso-2,6-diaminopimeloyl-D-alanyl-D-alanine + UMP. Its pathway is cell wall biogenesis; peptidoglycan biosynthesis. In terms of biological role, catalyzes the initial step of the lipid cycle reactions in the biosynthesis of the cell wall peptidoglycan: transfers peptidoglycan precursor phospho-MurNAc-pentapeptide from UDP-MurNAc-pentapeptide onto the lipid carrier undecaprenyl phosphate, yielding undecaprenyl-pyrophosphoryl-MurNAc-pentapeptide, known as lipid I. In Anaplasma marginale (strain Florida), this protein is Phospho-N-acetylmuramoyl-pentapeptide-transferase.